We begin with the raw amino-acid sequence, 121 residues long: uncharacterized protein (121 aa).

The 78-residue stretch at 10 to 87 folds into the RRM domain; that stretch reads YIIIVTGVHP…EKLEVDFAFL (78 aa). Residues 90-121 are disordered; the sequence is PERAPRPSISTRSRSQSPEVQHRDRDVAMAEP. The segment covering 97–108 has biased composition (polar residues); it reads SISTRSRSQSPE. The segment covering 109-121 has biased composition (basic and acidic residues); sequence VQHRDRDVAMAEP.

It localises to the cytoplasm. Its subcellular location is the nucleus. This is an uncharacterized protein from Schizosaccharomyces pombe (strain 972 / ATCC 24843) (Fission yeast).